The primary structure comprises 305 residues: Probable xyloglucan endotransglucosylase/hydrolase protein 21 (305 aa).

The first 25 residues, methionine 1–glycine 25, serve as a signal peptide directing secretion. A GH16 domain is found at lysine 26–phenylalanine 216. The N-linked (GlcNAc...) asparagine glycan is linked to asparagine 46. Glutamate 102 functions as the Nucleophile in the catalytic mechanism. Residue glutamate 106 is the Proton donor of the active site. Glutamate 106 lines the xyloglucan pocket. Residue asparagine 110 is glycosylated (N-linked (GlcNAc...) asparagine). Xyloglucan contacts are provided by residues histidine 119 to asparagine 121 and aspartate 129 to glutamate 131. N-linked (GlcNAc...) asparagine glycosylation occurs at asparagine 146. Xyloglucan is bound by residues aspartate 195–tryptophan 196 and glycine 200. N-linked (GlcNAc...) asparagine glycans are attached at residues asparagine 206 and asparagine 231. 2 disulfide bridges follow: cysteine 225–cysteine 239 and cysteine 282–cysteine 296. Residues threonine 236 to serine 253 are compositionally biased toward low complexity. A disordered region spans residues threonine 236–glutamine 258. Arginine 287 provides a ligand contact to xyloglucan.

It belongs to the glycosyl hydrolase 16 family. XTH group 2 subfamily. Contains at least one intrachain disulfide bond essential for its enzymatic activity. In terms of tissue distribution, predominantly expressed in green siliques.

It localises to the secreted. Its subcellular location is the cell wall. The protein resides in the extracellular space. It is found in the apoplast. The enzyme catalyses breaks a beta-(1-&gt;4) bond in the backbone of a xyloglucan and transfers the xyloglucanyl segment on to O-4 of the non-reducing terminal glucose residue of an acceptor, which can be a xyloglucan or an oligosaccharide of xyloglucan.. In terms of biological role, catalyzes xyloglucan endohydrolysis (XEH) and/or endotransglycosylation (XET). Cleaves and religates xyloglucan polymers, an essential constituent of the primary cell wall, and thereby participates in cell wall construction of growing tissues. The protein is Probable xyloglucan endotransglucosylase/hydrolase protein 21 (XTH21) of Arabidopsis thaliana (Mouse-ear cress).